Reading from the N-terminus, the 315-residue chain is Ribosomal RNA small subunit methyltransferase H (315 aa).

S-adenosyl-L-methionine-binding positions include 37–39, Asp-57, Phe-83, Asp-105, and Gln-112; that span reads GGH.

This sequence belongs to the methyltransferase superfamily. RsmH family.

The protein localises to the cytoplasm. It carries out the reaction cytidine(1402) in 16S rRNA + S-adenosyl-L-methionine = N(4)-methylcytidine(1402) in 16S rRNA + S-adenosyl-L-homocysteine + H(+). In terms of biological role, specifically methylates the N4 position of cytidine in position 1402 (C1402) of 16S rRNA. The polypeptide is Ribosomal RNA small subunit methyltransferase H (Pseudomonas putida (strain ATCC 700007 / DSM 6899 / JCM 31910 / BCRC 17059 / LMG 24140 / F1)).